Here is a 146-residue protein sequence, read N- to C-terminus: Hemoglobin subunit beta-1 (146 aa).

In terms of domain architecture, Globin spans 2–146; that stretch reads HWTAEEKQLI…VSHSLARRYH (145 aa). The heme b site is built by His63 and His92.

The protein belongs to the globin family. As to quaternary structure, the major hemoglobin component (HbIII) is a tetramer of two alpha-2 chains and two beta-1 chains. As to expression, red blood cells.

Its function is as follows. Involved in oxygen transport from the lung to the various peripheral tissues. The protein is Hemoglobin subunit beta-1 (HBB1) of Varanus albigularis (White-throated monitor).